We begin with the raw amino-acid sequence, 171 residues long: SWR1 complex subunit 6 (171 aa).

A disordered region spans residues D63 to K87. Positions K73–Q85 are enriched in basic residues. Zn(2+) is bound by residues C134, C137, C145, C148, C153, C157, H161, and C166. The segment at C134–C166 adopts an HIT-type zinc-finger fold.

Belongs to the ZNHIT1 family. As to quaternary structure, homodimer. Component of the SWR1 chromatin-remodeling complex composed of at least ARP6/ESD1/SUF3, PIE1, SWC6, SWC2 and H2AZs (HTA8, HTA9, HTA11). Interacts directly with ARP6, PIE1 and SWC2. Interacts with FLX and SUF4, two component of the transcription activator complex FRI-C, and with ASHH2 and TAF14. In terms of tissue distribution, expressed in root, lateral root primordia, shoot apex, leaves, stems, inflorescences, flowers, axillary buds, developing siliques and premature seeds.

It is found in the nucleus speckle. It localises to the nucleus. In terms of biological role, component of the SWR1 complex which mediates the ATP-dependent exchange of histone H2A for the H2A variant H2A.F/Z leading to transcriptional regulation of selected genes (e.g. FLC) by chromatin remodeling. Coodinates SWR1-C, FRI-C (FLC transcription activator complex), histone methyltransferase and general transcription factors. Represses flowering by positively regulating FLC and MAF4. Binds to the promoter region of FLC chromatin. This Arabidopsis thaliana (Mouse-ear cress) protein is SWR1 complex subunit 6 (SWC6).